Consider the following 363-residue polypeptide: Transcriptional regulator AacuR (363 aa).

The segment at 1-24 (MTSLQCPPPDRTRRSLSPTGPKFR) is disordered. The segment at residues 27–54 (CKSCAASKIRCTKEKPQCARCVKRNMVC) is a DNA-binding region (zn(2)-C6 fungal-type). A compositionally biased stretch (basic residues) spans 63 to 72 (RRKPGARLKH). The interval 63–104 (RRKPGARLKHRESITTNAHHSPTTTTITTSRTTSSSPSASPK) is disordered. A compositionally biased stretch (low complexity) spans 76–102 (ITTNAHHSPTTTTITTSRTTSSSPSAS).

Its subcellular location is the nucleus. In terms of biological role, transcriptional regulator; part of the gene cluster that mediates the biosynthesis of the tetrahydroxanthone dimer secalonic acid D. The polypeptide is Transcriptional regulator AacuR (Aspergillus aculeatus (strain ATCC 16872 / CBS 172.66 / WB 5094)).